A 182-amino-acid polypeptide reads, in one-letter code: Large ribosomal subunit protein uL6 (182 aa).

It belongs to the universal ribosomal protein uL6 family. Part of the 50S ribosomal subunit.

Its function is as follows. This protein binds to the 23S rRNA, and is important in its secondary structure. It is located near the subunit interface in the base of the L7/L12 stalk, and near the tRNA binding site of the peptidyltransferase center. The chain is Large ribosomal subunit protein uL6 from Caldicellulosiruptor saccharolyticus (strain ATCC 43494 / DSM 8903 / Tp8T 6331).